The primary structure comprises 76 residues: UPF0352 protein PC1_1633 (76 aa).

The protein belongs to the UPF0352 family.

The protein is UPF0352 protein PC1_1633 of Pectobacterium carotovorum subsp. carotovorum (strain PC1).